A 486-amino-acid polypeptide reads, in one-letter code: N-succinylglutamate 5-semialdehyde dehydrogenase (486 aa).

220-225 serves as a coordination point for NAD(+); it reads GSSRTG. Catalysis depends on residues Glu-243 and Cys-277.

Belongs to the aldehyde dehydrogenase family. AstD subfamily.

It carries out the reaction N-succinyl-L-glutamate 5-semialdehyde + NAD(+) + H2O = N-succinyl-L-glutamate + NADH + 2 H(+). Its pathway is amino-acid degradation; L-arginine degradation via AST pathway; L-glutamate and succinate from L-arginine: step 4/5. Catalyzes the NAD-dependent reduction of succinylglutamate semialdehyde into succinylglutamate. This Shewanella frigidimarina (strain NCIMB 400) protein is N-succinylglutamate 5-semialdehyde dehydrogenase.